The following is an 82-amino-acid chain: Small ribosomal subunit protein bS16 (82 aa).

This sequence belongs to the bacterial ribosomal protein bS16 family.

This is Small ribosomal subunit protein bS16 from Proteus mirabilis (strain HI4320).